The primary structure comprises 433 residues: Putative tartrate transporter (433 aa).

The next 11 helical transmembrane spans lie at 17 to 37 (IVPFIMLLYFVAFLDRVNIGF), 47 to 67 (GFSSTVFGIGAGIFFVGYFLF), 82 to 102 (IWIARVMITWGIVSGLMAFVQ), 113 to 133 (LLGVAEAGFFPGIILYLSFWF), 139 to 159 (AAVTAIFMAAAPLSTVLGSPI), 177 to 197 (WMFLIEAAPAVILGVVVLFYL), 242 to 262 (VIALALVYFGTSAGLYTLGIW), 275 to 295 (LQVGFINAVPGIFAVAAMVLW), 314 to 334 (LLAAVGLAFATGATSVFTVLI), 350 to 370 (LWSMPTLFLSGPAAAAGIATI), and 395 to 415 (FAGGLYFVAGLLVVSAIVTLV).

It belongs to the major facilitator superfamily. Phthalate permease family.

It localises to the cell membrane. In terms of biological role, component of the tartrate utilization system and may allow entry of tartrate and tartrate dehydrogenase. This Agrobacterium vitis (Rhizobium vitis) protein is Putative tartrate transporter (ttuB).